Here is a 155-residue protein sequence, read N- to C-terminus: Protein E6 (155 aa).

Zinc fingers lie at residues 39–75 and 112–148; these read CNFC…CRCC and CQNC…CRLC.

It belongs to the papillomaviridae E6 protein family. In terms of assembly, forms homodimers. Interacts with ubiquitin-protein ligase UBE3A/E6-AP; this interaction stimulates UBE3A ubiquitin activity. Interacts with host BAK1.

The protein localises to the host cytoplasm. It is found in the host nucleus. Its function is as follows. Plays a major role in the induction and maintenance of cellular transformation. E6 associates with host UBE3A/E6-AP ubiquitin-protein ligase and modulates its activity. Protects host keratinocytes from apoptosis by mediating the degradation of host BAK1. May also inhibit host immune response. The protein is Protein E6 of Homo sapiens (Human).